The chain runs to 21 residues: Peptide PGLa-B2 (21 aa).

L21 carries the post-translational modification Leucine amide.

As to expression, expressed by the skin glands.

It is found in the secreted. Has antimicrobial activity against Gram-negative bacterium E.coli ATCC 25922 (MIC=25 uM), Gram-positive bacterium S.auerus ATCC 25923 (MIC=50 uM) and against fungus C.albicans ATCC 90028 (MIC=25 uM). Has some hemolytic activity against human erythrocytes at high concentration. This is Peptide PGLa-B2 from Xenopus borealis (Kenyan clawed frog).